The primary structure comprises 1234 residues: PAN2-PAN3 deadenylation complex catalytic subunit PAN2 (1234 aa).

The segment at 12–32 is disordered; that stretch reads LKNSNNNSNSNSSSNNSSNGV. Residues 14 to 30 show a composition bias toward low complexity; the sequence is NSNNNSNSNSSSNNSSN. 3 WD repeats span residues 176 to 213, 272 to 315, and 342 to 381; these read NHTG…SIKT, AFPA…VYHA, and QQQP…TLSK. Residues 323–346 are disordered; that stretch reads PLPPAGSSAAQQQKQQQQQQQQPH. Low complexity predominate over residues 333–344; sequence QQQKQQQQQQQQ. The segment at 383-537 is linker; it reads FVNFPQEIER…DSIFQCQNDE (155 aa). Residues 538-946 enclose the USP domain; the sequence is KIPNCYSRLQ…KPVIVIYQEV (409 aa). The disordered stretch occupies residues 751–775; it reads PNTQQDQQQQQQQQQQQQQQQQPTN. Over residues 754 to 772 the composition is skewed to low complexity; sequence QQDQQQQQQQQQQQQQQQQ. Residues D1004, E1006, D1138, and D1191 each contribute to the a divalent metal cation site. The region spanning 1072–1199 is the Exonuclease domain; the sequence is GEAFIDDYIV…EDARTALLLY (128 aa).

This sequence belongs to the peptidase C19 family. PAN2 subfamily. Forms a heterotrimer with an asymmetric homodimer of the regulatory subunit PAN3 to form the poly(A)-nuclease (PAN) deadenylation complex. It depends on a divalent metal cation as a cofactor.

It localises to the cytoplasm. The catalysed reaction is Exonucleolytic cleavage of poly(A) to 5'-AMP.. Positively regulated by the regulatory subunit PAN3. Functionally, catalytic subunit of the poly(A)-nuclease (PAN) deadenylation complex, one of two cytoplasmic mRNA deadenylases involved in mRNA turnover. PAN specifically shortens poly(A) tails of RNA and the activity is stimulated by poly(A)-binding protein PAB1. PAN deadenylation is followed by rapid degradation of the shortened mRNA tails by the CCR4-NOT complex. Deadenylated mRNAs are then degraded by two alternative mechanisms, namely exosome-mediated 3'-5' exonucleolytic degradation, or deadenylation-dependent mRNA decaping and subsequent 5'-3' exonucleolytic degradation by XRN1. May also be involved in post-transcriptional maturation of mRNA poly(A) tails. In Lodderomyces elongisporus (strain ATCC 11503 / CBS 2605 / JCM 1781 / NBRC 1676 / NRRL YB-4239) (Yeast), this protein is PAN2-PAN3 deadenylation complex catalytic subunit PAN2.